Consider the following 251-residue polypeptide: Ubiquinone/menaquinone biosynthesis C-methyltransferase UbiE (251 aa).

S-adenosyl-L-methionine is bound by residues T74, D95, and 123-124; that span reads NA.

This sequence belongs to the class I-like SAM-binding methyltransferase superfamily. MenG/UbiE family.

The catalysed reaction is a 2-demethylmenaquinol + S-adenosyl-L-methionine = a menaquinol + S-adenosyl-L-homocysteine + H(+). It catalyses the reaction a 2-methoxy-6-(all-trans-polyprenyl)benzene-1,4-diol + S-adenosyl-L-methionine = a 5-methoxy-2-methyl-3-(all-trans-polyprenyl)benzene-1,4-diol + S-adenosyl-L-homocysteine + H(+). The protein operates within quinol/quinone metabolism; menaquinone biosynthesis; menaquinol from 1,4-dihydroxy-2-naphthoate: step 2/2. It functions in the pathway cofactor biosynthesis; ubiquinone biosynthesis. Methyltransferase required for the conversion of demethylmenaquinol (DMKH2) to menaquinol (MKH2) and the conversion of 2-polyprenyl-6-methoxy-1,4-benzoquinol (DDMQH2) to 2-polyprenyl-3-methyl-6-methoxy-1,4-benzoquinol (DMQH2). This Shewanella sp. (strain ANA-3) protein is Ubiquinone/menaquinone biosynthesis C-methyltransferase UbiE.